Here is a 346-residue protein sequence, read N- to C-terminus: Biotin synthase (346 aa).

The region spanning Arg-38–Thr-256 is the Radical SAM core domain. Positions 53, 57, and 60 each coordinate [4Fe-4S] cluster. [2Fe-2S] cluster-binding residues include Cys-97, Cys-128, Cys-188, and Arg-260.

This sequence belongs to the radical SAM superfamily. Biotin synthase family. As to quaternary structure, homodimer. The cofactor is [4Fe-4S] cluster. [2Fe-2S] cluster serves as cofactor.

It catalyses the reaction (4R,5S)-dethiobiotin + (sulfur carrier)-SH + 2 reduced [2Fe-2S]-[ferredoxin] + 2 S-adenosyl-L-methionine = (sulfur carrier)-H + biotin + 2 5'-deoxyadenosine + 2 L-methionine + 2 oxidized [2Fe-2S]-[ferredoxin]. The protein operates within cofactor biosynthesis; biotin biosynthesis; biotin from 7,8-diaminononanoate: step 2/2. Functionally, catalyzes the conversion of dethiobiotin (DTB) to biotin by the insertion of a sulfur atom into dethiobiotin via a radical-based mechanism. The sequence is that of Biotin synthase from Pseudescherichia vulneris (Escherichia vulneris).